The following is a 1176-amino-acid chain: Growth-differentiation transition protein 5 (1176 aa).

Positions 1-25 (MKNNFFKKTIILLIFLSIFILYSNA) are cleaved as a signal peptide. Residues 26–913 (DEETITTPPG…DVPANENTLN (888 aa)) lie on the Extracellular side of the membrane. The helical transmembrane segment at 914 to 934 (LLTIVLPICSAVVVASSVMLG) threads the bilayer. Over 935–1176 (RLFYKKKFKK…NVGYNVHEYF (242 aa)) the chain is Cytoplasmic. Low complexity-rich tracts occupy residues 965–974 (SNIENKSESI) and 1053–1066 (PQISPDSPQHSIPS). 2 disordered regions span residues 965 to 985 (SNIENKSESIATPQQRNEQKE) and 1050 to 1080 (VDTPQISPDSPQHSIPSSSPPPPPLPLPPST). A compositionally biased stretch (pro residues) spans 1067 to 1078 (SSPPPPPLPLPP).

This sequence belongs to the GDT family.

The protein localises to the membrane. The protein is Growth-differentiation transition protein 5 (gdt5) of Dictyostelium discoideum (Social amoeba).